Consider the following 438-residue polypeptide: Asparagine--tRNA ligase (438 aa).

Belongs to the class-II aminoacyl-tRNA synthetase family. As to quaternary structure, homodimer.

Its subcellular location is the cytoplasm. The enzyme catalyses tRNA(Asn) + L-asparagine + ATP = L-asparaginyl-tRNA(Asn) + AMP + diphosphate + H(+). In Thermus thermophilus (strain ATCC BAA-163 / DSM 7039 / HB27), this protein is Asparagine--tRNA ligase.